A 330-amino-acid polypeptide reads, in one-letter code: D-cysteine desulfhydrase (330 aa).

Lys-52 is modified (N6-(pyridoxal phosphate)lysine).

This sequence belongs to the ACC deaminase/D-cysteine desulfhydrase family. In terms of assembly, homodimer. Requires pyridoxal 5'-phosphate as cofactor.

It carries out the reaction D-cysteine + H2O = hydrogen sulfide + pyruvate + NH4(+) + H(+). Catalyzes the alpha,beta-elimination reaction of D-cysteine and of several D-cysteine derivatives. It could be a defense mechanism against D-cysteine. This is D-cysteine desulfhydrase from Yersinia pseudotuberculosis serotype O:1b (strain IP 31758).